The following is a 199-amino-acid chain: NAD(P)H-quinone oxidoreductase subunit 6, chloroplastic (199 aa).

The next 5 helical transmembrane spans lie at 13–33, 35–55, 64–84, 96–118, and 157–177; these read AILL…VLFT, IVYS…LYIL, VQIL…VMLI, WTVG…IAAI, and LPFE…ITMA.

The protein belongs to the complex I subunit 6 family. As to quaternary structure, NDH is composed of at least 16 different subunits, 5 of which are encoded in the nucleus.

The protein localises to the plastid. It localises to the chloroplast thylakoid membrane. It catalyses the reaction a plastoquinone + NADH + (n+1) H(+)(in) = a plastoquinol + NAD(+) + n H(+)(out). The enzyme catalyses a plastoquinone + NADPH + (n+1) H(+)(in) = a plastoquinol + NADP(+) + n H(+)(out). In terms of biological role, NDH shuttles electrons from NAD(P)H:plastoquinone, via FMN and iron-sulfur (Fe-S) centers, to quinones in the photosynthetic chain and possibly in a chloroplast respiratory chain. The immediate electron acceptor for the enzyme in this species is believed to be plastoquinone. Couples the redox reaction to proton translocation, and thus conserves the redox energy in a proton gradient. This is NAD(P)H-quinone oxidoreductase subunit 6, chloroplastic (ndhG) from Huperzia lucidula (Shining clubmoss).